A 288-amino-acid chain; its full sequence is Short chain aldehyde dehydrogenase 1 (288 aa).

NAD(+)-binding positions include 26–28 (SGI), Asp47, 72–73 (DV), and 99–101 (NAG). Ser153 (proton donor) is an active-site residue. Substrate is bound by residues Ser153 and Tyr166. 3 residues coordinate NAD(+): Tyr166, Lys170, and Thr201. Tyr166 (proton acceptor) is an active-site residue. Lys170 serves as the catalytic Proton donor/acceptor.

This sequence belongs to the short-chain dehydrogenases/reductases (SDR) family. As to quaternary structure, homodimer. As to expression, expressed in mature seeds.

It carries out the reaction 4,5,8-trihydroxycasbene + 2 NAD(+) = jolkinol C + 2 NADH + 2 H(+). The catalysed reaction is a secondary alcohol + NAD(+) = a ketone + NADH + H(+). It catalyses the reaction a primary alcohol + NAD(+) = an aldehyde + NADH + H(+). It functions in the pathway secondary metabolite biosynthesis; terpenoid biosynthesis. Its function is as follows. Involved in the biosynthesis of macrocyclic lathyrane type diterpenoids (also called Euphorbia factors) natural products, including the cyclization route from casbene to jolkinol C, a precursor for ingenol mebutate that is used to treat actinic keratosis, a precancerous skin condition. Catalyzes the conversion of 4,5,8-trihydroxycasbene into jolkinol C in presence of NAD. Also mediates the formation of casbene dione derivative and 4-ketocasbene from 4-hydroxy-8-ketocasbene and 4-hydroxycasbene, respectively. Together with CYP71D445, triggers the biosynthesis of 8-ketocasbene from 8-hydroxycasbene. This chain is Short chain aldehyde dehydrogenase 1, found in Euphorbia lathyris (Caper spurge).